Reading from the N-terminus, the 606-residue chain is Proline--tRNA ligase (606 aa).

It belongs to the class-II aminoacyl-tRNA synthetase family. ProS type 1 subfamily. In terms of assembly, homodimer.

The protein localises to the cytoplasm. The enzyme catalyses tRNA(Pro) + L-proline + ATP = L-prolyl-tRNA(Pro) + AMP + diphosphate. Functionally, catalyzes the attachment of proline to tRNA(Pro) in a two-step reaction: proline is first activated by ATP to form Pro-AMP and then transferred to the acceptor end of tRNA(Pro). As ProRS can inadvertently accommodate and process non-cognate amino acids such as alanine and cysteine, to avoid such errors it has two additional distinct editing activities against alanine. One activity is designated as 'pretransfer' editing and involves the tRNA(Pro)-independent hydrolysis of activated Ala-AMP. The other activity is designated 'posttransfer' editing and involves deacylation of mischarged Ala-tRNA(Pro). The misacylated Cys-tRNA(Pro) is not edited by ProRS. The protein is Proline--tRNA ligase of Kocuria rhizophila (strain ATCC 9341 / DSM 348 / NBRC 103217 / DC2201).